A 58-amino-acid chain; its full sequence is Large ribosomal subunit protein uL30 (58 aa).

This sequence belongs to the universal ribosomal protein uL30 family. In terms of assembly, part of the 50S ribosomal subunit.

The protein is Large ribosomal subunit protein uL30 of Acinetobacter baylyi (strain ATCC 33305 / BD413 / ADP1).